The following is a 301-amino-acid chain: GTPase Era (301 aa).

The region spanning 7 to 175 (YCGFIAIVGR…AAIVRKHLPE (169 aa)) is the Era-type G domain. A G1 region spans residues 15–22 (GRPNVGKS). 15–22 (GRPNVGKS) is a binding site for GTP. The tract at residues 41–45 (QTTRH) is G2. The tract at residues 62-65 (DTPG) is G3. Residues 62–66 (DTPGL) and 124–127 (NKVD) each bind GTP. Residues 124–127 (NKVD) are G4. The G5 stretch occupies residues 154-156 (ISA). Residues 206-283 (LGAELPYSVT…HLELWVKVKS (78 aa)) enclose the KH type-2 domain.

It belongs to the TRAFAC class TrmE-Era-EngA-EngB-Septin-like GTPase superfamily. Era GTPase family. In terms of assembly, monomer.

It localises to the cytoplasm. Its subcellular location is the cell inner membrane. Functionally, an essential GTPase that binds both GDP and GTP, with rapid nucleotide exchange. Plays a role in 16S rRNA processing and 30S ribosomal subunit biogenesis and possibly also in cell cycle regulation and energy metabolism. In Escherichia coli O157:H7, this protein is GTPase Era.